Here is a 206-residue protein sequence, read N- to C-terminus: Undecaprenyl-diphosphatase (206 aa).

5 helical membrane-spanning segments follow: residues 5-25, 53-73, 79-99, 138-158, and 164-184; these read YYWILLLLFLILSIYIKLIGG, FLSKYGREYVWIPVTALLLIF, IGITLVISFVIAIVLGEVSKY, VTLLLTSPKWMWILGIIEAVL, and VYVGVHWPLDVIAGWLLGSWI.

It localises to the cell membrane. The enzyme catalyses di-trans,octa-cis-undecaprenyl diphosphate + H2O = di-trans,octa-cis-undecaprenyl phosphate + phosphate + H(+). The polypeptide is Undecaprenyl-diphosphatase (sepP) (Sulfolobus acidocaldarius (strain ATCC 33909 / DSM 639 / JCM 8929 / NBRC 15157 / NCIMB 11770)).